The chain runs to 531 residues: Cytochrome P450 monooxygenase acuC (531 aa).

The helical transmembrane segment at 3 to 23 threads the bilayer; the sequence is PIVWLLGGAIALLVVVIRAAW. Cys-447 serves as a coordination point for heme.

This sequence belongs to the cytochrome P450 family. Heme serves as cofactor.

It is found in the endoplasmic reticulum membrane. It carries out the reaction 3-methylphenol + reduced [NADPH--hemoprotein reductase] + O2 = 3-hydroxybenzyl alcohol + oxidized [NADPH--hemoprotein reductase] + H2O + H(+). Its pathway is secondary metabolite biosynthesis. Its function is as follows. Cytochrome P450 monooxygenase; part of the gene cluster that mediates the biosynthesis of aculins. The pathway begins with the synthesis of 6-methylsalicylic acid by the polyketide synthase (PKS) acuA via condensation of acetate and malonate units. The 6-methylsalicylic acid decarboxylase acuB then catalyzes the decarboxylation of 6-methylsalicylic acid to yield m-cresol (also known as 3-methylphenol). These first reactions occur in the cytosol. The intermediate m-cresol is then transported into the endoplasmic reticulum where the cytochrome P450 monooxygenase acuC converts it to m-hydroxybenzyl alcohol, which is further converted to gentisyl alcohol by the cytochrome P450 monooxygenase acuD. Gentisyl alcohol is further oxidized by the oxidoreductase acuE that probably catalyzes hydroxylation of the aromatic ring. The aromatic system might then be opened by oxidation through a Baeyer-Villiger type of oxidation, which could be catalyzed by acuF, with the carboxylic acid at C-1 subsequently reduced to an aldehyde by acuG. Subsequently, a hemiacetal is formed, before the dehydrogenase acuH would reduce the double bond between C-4 and C-6. Finally, keto-enol tautomerism results in formation of aculinic acid, which exists as two diastereomers (both R/S configurations at C-1) by non-enzymatic hemiacetal formation. The carboxypeptidase acuI could be involved in the linking of aculinic acid to an aculene A moiety produced by the aculene biosynthesis cluster and which leads to the production of aculin A. AcuI may also be involved in the attachment of proline to aculinic acid to form epi-aculins A and B. This chain is Cytochrome P450 monooxygenase acuC, found in Aspergillus aculeatus (strain ATCC 16872 / CBS 172.66 / WB 5094).